Here is a 354-residue protein sequence, read N- to C-terminus: MALVHYMNVSRSTFPLSRSSKINLSSSFASLPLQFHKNIKRLESSVPPSASASASPAFPIDVEYLRREFSGHGATFEDIGETCIARLKLDNGSSANVMLTRGMITSYKVRVWHGGKVELLHTWVEQEEEEVVIRGGVSSAFRSSDSDEISDWRLQGISGDSKDCVQMELRRSDKKIKEIELKQIISLRENTLSIELSMTNKGISPIKLEGCSLVSYLTVSTPEATYAVGLEGSDFVETTPFLPRFGVVQGEKEEEKPGFGGEEESNYKQLNREMSRIYTCAPKSFTVIDRGRRNSVVVGREGFEEVYMYSPGSRLESYTKSAYVCIGPSSLLSPISLESGCVWRGVLHLHNPNS.

The transit peptide at methionine 1–serine 49 directs the protein to the chloroplast.

The protein resides in the plastid. It is found in the chloroplast thylakoid membrane. Its function is as follows. Required for both formation and activity of the chloroplast NAD(P)H dehydrogenase (NDH) complex of the photosynthetic electron transport chain. May function in assembly or stabilization of the NDH complex. In Arabidopsis thaliana (Mouse-ear cress), this protein is Protein NDH-DEPENDENT CYCLIC ELECTRON FLOW 5.